A 201-amino-acid chain; its full sequence is MPLSIIHFPHPTLRHVSRPIVRVDAKLKSMADEMLDLMYEFDGVGLAANQVDLPIRMFVANPTGKRDEGESWVILNPEIDRPKGNDTAQEGCLSVPGLYGQVKRPKTVRLRGFDLQGNEINQVLDGFMARVVQHEVDHLDGIMFFDRIGEEGLRDLEGHLEEFKTDYESKQGTGSIADEATLAQQRAEWEAMYTGGTTSNG.

2 residues coordinate Fe cation: Cys92 and His134. Glu135 is a catalytic residue. His138 contributes to the Fe cation binding site.

The protein belongs to the polypeptide deformylase family. The cofactor is Fe(2+).

It catalyses the reaction N-terminal N-formyl-L-methionyl-[peptide] + H2O = N-terminal L-methionyl-[peptide] + formate. In terms of biological role, removes the formyl group from the N-terminal Met of newly synthesized proteins. Requires at least a dipeptide for an efficient rate of reaction. N-terminal L-methionine is a prerequisite for activity but the enzyme has broad specificity at other positions. In Rhodopirellula baltica (strain DSM 10527 / NCIMB 13988 / SH1), this protein is Peptide deformylase.